Reading from the N-terminus, the 71-residue chain is Gas vesicle protein A (71 aa).

Belongs to the gas vesicle GvpA family. As to quaternary structure, the gas vesicle shell is 2 nm thick and consists of a single layer of this protein. It forms helical ribs nearly perpendicular to the long axis of the vesicle.

The protein localises to the gas vesicle shell. In terms of biological role, gas vesicles are hollow, gas filled proteinaceous nanostructures found in some microorganisms. During planktonic growth they allow positioning of the organism at a favorable depth for light or nutrient acquisition. GvpA forms the protein shell. Functionally, cluster expression in E.coli (gvpA1-gvpA2-gvpC-gvpN-gvpJ-gvpK-gvpF-gvpG-gvpV-gvpW) allows cells to float and produces irregularly shaped gas vesicles. This Nostoc sp. (strain PCC 7120 / SAG 25.82 / UTEX 2576) protein is Gas vesicle protein A.